The sequence spans 303 residues: Putative AraC-like transcription regulator (303 aa).

Residues 202-300 (ASALTFLHRD…GMNPGDYRKH (99 aa)) enclose the HTH araC/xylS-type domain. DNA-binding regions (H-T-H motif) lie at residues 219-240 (AELA…KATV) and 267-290 (LAAI…KRVL).

The polypeptide is Putative AraC-like transcription regulator (Streptomyces antibioticus).